We begin with the raw amino-acid sequence, 453 residues long: tRNA modification GTPase MnmE (453 aa).

(6S)-5-formyl-5,6,7,8-tetrahydrofolate is bound by residues R22, E79, and K119. The region spanning 215–376 (GMKVVIAGRP…LKQHLKSLMG (162 aa)) is the TrmE-type G domain. N225 lines the K(+) pocket. GTP contacts are provided by residues 225 to 230 (NAGKSS), 244 to 250 (TEIAGTT), 269 to 272 (DTAG), and 334 to 337 (NKAD). Residue S229 participates in Mg(2+) binding. K(+)-binding residues include T244, I246, and T249. T250 contributes to the Mg(2+) binding site. (6S)-5-formyl-5,6,7,8-tetrahydrofolate is bound at residue K453.

This sequence belongs to the TRAFAC class TrmE-Era-EngA-EngB-Septin-like GTPase superfamily. TrmE GTPase family. In terms of assembly, homodimer. Heterotetramer of two MnmE and two MnmG subunits. The cofactor is K(+).

The protein resides in the cytoplasm. Exhibits a very high intrinsic GTPase hydrolysis rate. Involved in the addition of a carboxymethylaminomethyl (cmnm) group at the wobble position (U34) of certain tRNAs, forming tRNA-cmnm(5)s(2)U34. The protein is tRNA modification GTPase MnmE of Shewanella baltica (strain OS155 / ATCC BAA-1091).